The sequence spans 240 residues: MNAIAIIAASGIGKRMQLPGGRSKQLLEIGGFPVIHHTLKAFEDASQVTEVYIATKADNIDLLQDMARSAGFRKVRHVIEGGKERQDSVWNCIRMISDGHSGAGELPDAILVHDGARPFIRPEEIDDIVRLSVESGACVPGNRPKDTIKYIGSDPSCFGATLERSRLMQVQTPQGFRAGMLIDAHHRAAEEGWYATDDAALVERYFPDYPVRIYETGYHNIKITTPEDIPVAEAIYQALL.

The protein belongs to the IspD/TarI cytidylyltransferase family. IspD subfamily.

The catalysed reaction is 2-C-methyl-D-erythritol 4-phosphate + CTP + H(+) = 4-CDP-2-C-methyl-D-erythritol + diphosphate. The protein operates within isoprenoid biosynthesis; isopentenyl diphosphate biosynthesis via DXP pathway; isopentenyl diphosphate from 1-deoxy-D-xylulose 5-phosphate: step 2/6. Its function is as follows. Catalyzes the formation of 4-diphosphocytidyl-2-C-methyl-D-erythritol from CTP and 2-C-methyl-D-erythritol 4-phosphate (MEP). The sequence is that of 2-C-methyl-D-erythritol 4-phosphate cytidylyltransferase from Chlorobium luteolum (strain DSM 273 / BCRC 81028 / 2530) (Pelodictyon luteolum).